A 276-amino-acid chain; its full sequence is Undecaprenyl-diphosphatase (276 aa).

A run of 7 helical transmembrane segments spans residues 40-60 (GLAF…TFFW), 98-118 (WLII…KDAI), 121-141 (IFRG…VLYY), 155-175 (MSFK…FPGI), 200-220 (FLLS…DIAT), 227-247 (VLLA…KLLM), and 255-275 (LDIF…LSVV).

It belongs to the UppP family.

It is found in the cell membrane. It carries out the reaction di-trans,octa-cis-undecaprenyl diphosphate + H2O = di-trans,octa-cis-undecaprenyl phosphate + phosphate + H(+). Its function is as follows. Catalyzes the dephosphorylation of undecaprenyl diphosphate (UPP). The sequence is that of Undecaprenyl-diphosphatase from Methanosphaera stadtmanae (strain ATCC 43021 / DSM 3091 / JCM 11832 / MCB-3).